The sequence spans 352 residues: ADP-ribosylation factor GTPase-activating protein GCS1 (352 aa).

One can recognise an Arf-GAP domain in the interval R11–F127. The C4-type zinc-finger motif lies at C26–C49. Over residues S138–T151 the composition is skewed to low complexity. Disordered stretches follow at residues S138–Q181 and N196–N231. Phosphothreonine is present on T151. S157 carries the post-translational modification Phosphoserine. T161 bears the Phosphothreonine mark. Position 168 is a phosphoserine (S168). Residues S168–N179 show a composition bias toward polar residues. Position 170 is a phosphothreonine (T170). At S260 the chain carries Phosphoserine. Residues N315 to T330 are compositionally biased toward polar residues. Positions N315–F352 are disordered. The span at E331–E343 shows a compositional bias: basic and acidic residues.

Its subcellular location is the cytoplasm. It is found in the mitochondrion. The protein resides in the perinuclear region. The protein localises to the golgi apparatus. In terms of biological role, GTPase-activating protein (GAP) for ARF1 and ARF2. Involved in intracellular vesicular transport. Required for transport from the trans-Golgi network. Implicated in the regulation of retrograde transport from the Golgi to the ER and in actin cytoskeletal organization. May be involved in the maintenance of mitochondrial morphology, possibly through organizing the actin cytoskeleton in Saccharomyces. The polypeptide is ADP-ribosylation factor GTPase-activating protein GCS1 (GCS1) (Saccharomyces cerevisiae (strain ATCC 204508 / S288c) (Baker's yeast)).